The chain runs to 97 residues: Large ribosomal subunit protein eL30 (97 aa).

Belongs to the eukaryotic ribosomal protein eL30 family.

This Methanoregula boonei (strain DSM 21154 / JCM 14090 / 6A8) protein is Large ribosomal subunit protein eL30.